A 146-amino-acid polypeptide reads, in one-letter code: Hemoglobin subunit beta (146 aa).

Val-1 is subject to N-acetylvaline. One can recognise a Globin domain in the interval 2–146; it reads HLTDAEKAAV…VATALAHKYH (145 aa). Ser-44 is subject to Phosphoserine. At Lys-59 the chain carries N6-acetyllysine. Position 63 (His-63) interacts with heme b. Position 82 is an N6-acetyllysine (Lys-82). Residue His-92 coordinates heme b. An S-nitrosocysteine modification is found at Cys-93. At Lys-144 the chain carries N6-acetyllysine.

It belongs to the globin family. In terms of assembly, heterotetramer of two alpha chains and two beta chains. Red blood cells.

Involved in oxygen transport from the lung to the various peripheral tissues. This Spalax ehrenbergi (Middle East blind mole rat) protein is Hemoglobin subunit beta (HBB).